Reading from the N-terminus, the 138-residue chain is Ribosome-binding factor A (138 aa).

It belongs to the RbfA family. As to quaternary structure, monomer. Binds 30S ribosomal subunits, but not 50S ribosomal subunits or 70S ribosomes.

The protein localises to the cytoplasm. One of several proteins that assist in the late maturation steps of the functional core of the 30S ribosomal subunit. Associates with free 30S ribosomal subunits (but not with 30S subunits that are part of 70S ribosomes or polysomes). Required for efficient processing of 16S rRNA. May interact with the 5'-terminal helix region of 16S rRNA. This chain is Ribosome-binding factor A, found in Paracoccus denitrificans (strain Pd 1222).